The primary structure comprises 309 residues: NADH-cytochrome b5 reductase 1 (309 aa).

The chain crosses the membrane as a helical span at residues 30 to 50 (FVPYAVAVTAILAGLKLFTGG). An FAD-binding FR-type domain is found at 60-165 (TEFQEFVLKE…RGPKGAMVYT (106 aa)). FAD is bound by residues 145–160 (TTLKIGDTMKVRGPKG) and 171–208 (HIGMIAGGTGITPMLQIIKAVIRNRPRNGGNDTTKLDL).

This sequence belongs to the flavoprotein pyridine nucleotide cytochrome reductase family. As to quaternary structure, monomer. Component of the 2-(3-amino-3-carboxypropyl)histidine synthase complex composed of dph1, dph2, dph3 and a NADH-dependent reductase, predominantly cbr1. FAD serves as cofactor.

Its subcellular location is the mitochondrion outer membrane. The catalysed reaction is 2 Fe(III)-[cytochrome b5] + NADH = 2 Fe(II)-[cytochrome b5] + NAD(+) + H(+). It carries out the reaction 2 Fe(3+)-[Dph3] + NADH = 2 Fe(2+)-[Dph3] + NAD(+) + H(+). The protein operates within protein modification; peptidyl-diphthamide biosynthesis. Functionally, NADH-dependent reductase for dph3 and cytochrome b5. Required for the first step of diphthamide biosynthesis, a post-translational modification of histidine which occurs in elongation factor 2. Dph1 and dph2 transfer a 3-amino-3-carboxypropyl (ACP) group from S-adenosyl-L-methionine (SAM) to a histidine residue, the reaction is assisted by a reduction system comprising dph3 and a NADH-dependent reductase, predominantly cbr1. By reducing dph3, also involved in the formation of the tRNA wobble base modification mcm5s 2U (5-methoxycarbonylmethyl-2-thiouridine), mediated by the elongator complex. The cytochrome b5/NADH cytochrome b5 reductase electron transfer system supports the catalytic activity of several sterol biosynthetic enzymes. This chain is NADH-cytochrome b5 reductase 1 (cbr1), found in Aspergillus fumigatus (strain ATCC MYA-4609 / CBS 101355 / FGSC A1100 / Af293) (Neosartorya fumigata).